The following is a 2512-amino-acid chain: MEDVVIAGIAGKLPESENLQEFWENLLNGVDMVTEDDRRWKPGIYGLPKRNGKLKDIKKFDASFFGVHPKQAHTMDPQLRLLLEVSYEAILDGGINPTALRGTDTGVWVGASGSEALEALSQDPEELLGYSMTGCQRAMLANRISYFYDFTGPSLTIDTACSSSLMALENAYKAIRHGQCSAALVGGVNILLKPNTSVQFMKLGMLSPDGACKAFDVSGNGYCRSEAVVVVLLTKKSMAKRVYATIVNAGSNTDGFKEQGVTFPSGEMQQQLVGSLYRECGIKPGDVEYVEAHGTGTKVGDPQEVNGIVNVFCQCEREPLLIGSTKSNMGHPEPASGLAALAKVILSLEHGLWAPNLHFNDPNPDIPALHDGSLKVVCKPTPVKGGLVSINSFGFGGSNAHVILRPNEKKCQPQETCNLPRLVQVCGRTQEAVEILIEESRKHGGCSPFLSLLSDISAVPVSSMPYRGYTLVGTESDITEIQQVQASGRPLWYICSGMGTQWKGMGLSLMKLDLFRQSILRSDEALKSTGLKVSDLLLNADENTFDDTVHAFVGLAAIQIAQIDVLKAAGLQPDGILGHSVGELACGYADNSLSHEEAVLAAYWRGRCVKEAKLPPGGMAAVGLTWEECKQRCPPNVVPACHNSEDTVTVSGPLDSVSEFVTKLKKDGVFAKEVRRAGVAFHSYYMASIAPALLSALKKVIPHPKPRSARWISTSIPESQWQSDLARNSSAEYHVNNLVNPVLFHEGLKHIPENAVVVEIAPHALLQAILRRTLKPTCTILPLMKKDHKNNLEFFLTQTGKIHLTGINVLGNNLFPPVEYPVPVGTPLISPYIKWDHSQDWDVPKAEDFPSGSKGSASASVYNIDVSPDSPDHYLVGHCIDGRVLYPATGYLVLAWRTLARSLGMVMEQTAVMFEEVTIHQATILPKKGSTQLEVRIMPASHSFEVSGNGNLAVSGKISLLENDALKNFHNQLADFQSQANVTAKSGLLMEDVYQELHLRGYNYGPTFQGVLECNSEGSAGKILWNGNWVTFLDTLLHLIVLAETGRSLRLPTRIRSVYIDPVLHQEQVYQYQDNVEAFDVVVDRCLDSLKAGGVQINGLHASVAPRRQQERISPTLEKFSFVPYIESDCLSSSTQLHAYLEHCKGLIQKLQAKMALHGVKLVIHGLETKGAAAGSPPAQKGLQHILTEICRLELNGNPHSELEQIVTQEKMHLQDDPLLNGLLDSSELKTCLDVAKENTTSHRMKIVEALAGSGRLFSRVQSILNTQPLLQLDYIATDCTPETLSDNETELHDAGISFSQWDPSSLPSGNLTNADLAVCNCSTSVLGNTAEIISNLAAAVKEGGFVLLHTLLKEETLGEIVSFLTSPDLQQKHSFLSQAQWEELFSKASLNLVAMKRSFFGSVIFLCRRQSPAKAPILLPVDDTHYKWVDSLKEILADSSEQPLWLTATNCGNSGILGMVNCLRLEAEGHRIRCVFVSNLSPSSTVPATSLSSLEMQKIIERDLVMNVYRDGKWGSFRHLPLQQAQPQELTECAYVNVLTRGDLSSLRWIVSPLRHFQTTNPNVQLCKVYYASLNFWDIMLATGKLSPDAIPGNWTLQQCMLGMEFSGRDLAGRRVMGLLPAKGLATVVDCDKRFLWEVPENWTLEEAASVPVVYATAYYALVVRGGMKKGESVLIHSGSGGVGQAAIAIALSMGCRVFATVGSAEKREYLQARFPQLDANSFASSRNTTFQQHILRVTNGKGVSLVLNSLAEEKLQASLRCLAQHGRFLEIGKFDLSNNSQLGMALFLKNVAFHGILLDSIFEEGNQEWEVVSELLTKGIKDGVVKPLRTTVFGKEEVEAAFRFMAQGKHIGKVMIKIQEEEKQYPLRSEPVKLSAISRTSCPPTKSYIITGGLGGFGLELAQWLIERGAQKLVLTSRSGIRTGYQAKCVREWKALGIQVLVSTSDVGTLEGTQLLIEEALKLGPVGGIFNLAVVLKDAMIENQTPELFWEVNKPKYSGTLHLDWVTRKKCPDLDYFVVFSSVSCGRGNAGQSNYGFANSAMERICEQRHHDGLPGLAVQWGAIGDVGILKAMGNREVVIGGTVLQQISSCLEVLDMFLNQPHPVMSSFVLAEKVSVKSEGGSQRDLVEAVAHILGVRDVSSLNAESSLADLGLDSLMGVEVRQTLERDYDIVMTMREIRLLTINKLRELSSKTGTAEELKPSQVLKTGPGEPPKLDLNNLLVNPEGPTITRLNEVQSTERPLFLVHPIEGSIAVFYTLASKLHMPCYGLQCTKAAPLDSIQSLASYYIDCMKQIQPEGPYRIAGYSFGACVAFEMCSQLQAQQNASHALNSLFLFDGSHSFVAAYTQSYRAKLTQGNEAALETEALCAFVQQFTGIEYNKLLEILLPLEDLEARVNAAADLITQIHKNINREALSFAAASFYHKLKAADKYIPESKYHGNVTLMRAKTHNEYEEGLGGDYRLSEVCDGKVSVHIIEGDHRTLLEGDGVESIIGIIHGSLAEPRVSVREG.

E2 carries the post-translational modification N-acetylglutamate. One can recognise a Ketosynthase family 3 (KS3) domain in the interval 2 to 406; it reads EDVVIAGIAG…GSNAHVILRP (405 aa). Residues C161, H293, and H331 each act as for beta-ketoacyl synthase activity in the active site. The tract at residues 427 to 815 is acyl and malonyl transferases; the sequence is GRTQEAVEIL…GINVLGNNLF (389 aa). S580 functions as the For acyl/malonyl transferase activity in the catalytic mechanism. An acyl-CoA-binding positions include 646-647, F670, and R772; that span reads DT. Residues 844 to 967 form an N-terminal hotdog fold region; it reads PKAEDFPSGS…ISLLENDALK (124 aa). Positions 844–1111 constitute a PKS/mFAS DH domain; sequence PKAEDFPSGS…ASVAPRRQQE (268 aa). The active-site Proton acceptor; for dehydratase activity is the H878. Residues 984 to 1111 form a C-terminal hotdog fold region; it reads AKSGLLMEDV…ASVAPRRQQE (128 aa). D1034 (proton donor; for dehydratase activity) is an active-site residue. An S-nitrosocysteine modification is found at C1475. An enoyl reductase region spans residues 1638–1866; sequence WEVPENWTLE…MIKIQEEEKQ (229 aa). 1675-1692 serves as a coordination point for NADP(+); that stretch reads VLIHSGSGGVGQAAIAIA. An N6-(pyridoxal phosphate)lysine modification is found at K1708. A beta-ketoacyl reductase region spans residues 1867–2119; the sequence is YPLRSEPVKL…SFVLAEKVSV (253 aa). 1889–1904 is a binding site for NADP(+); sequence SYIITGGLGGFGLELA. Residue C2093 is modified to S-nitrosocysteine. The 81-residue stretch at 2120 to 2200 folds into the Carrier domain; it reads KSEGGSQRDL…ELSSKTGTAE (81 aa). At S2158 the chain carries O-(pantetheine 4'-phosphoryl)serine. Positions 2209–2511 are thioesterase; that stretch reads KTGPGEPPKL…LAEPRVSVRE (303 aa). Catalysis depends on for thioesterase activity residues S2309 and H2482.

In terms of assembly, homodimer which is arranged in a head to tail fashion. Post-translationally, S-nitrosylation of Fatty acid synthase at cysteine residues Cys-1475 or Cys-2093 is important for the enzyme dimerization. In adipocytes, S-nitrosylation of Fatty acid synthase occurs under physiological conditions and gradually increases during adipogenesis.

It catalyses the reaction acetyl-CoA + n malonyl-CoA + 2n NADPH + 2n H(+) = a long-chain fatty acid + (n+1) CoA + n CO2 + 2n NADP(+).. The catalysed reaction is holo-[ACP] + acetyl-CoA = acetyl-[ACP] + CoA. It carries out the reaction holo-[ACP] + malonyl-CoA = malonyl-[ACP] + CoA. The enzyme catalyses a fatty acyl-[ACP] + malonyl-[ACP] + H(+) = a 3-oxoacyl-[ACP] + holo-[ACP] + CO2. It catalyses the reaction a (3R)-hydroxyacyl-[ACP] + NADP(+) = a 3-oxoacyl-[ACP] + NADPH + H(+). The catalysed reaction is a (3R)-hydroxyacyl-[ACP] = a (2E)-enoyl-[ACP] + H2O. It carries out the reaction a 2,3-saturated acyl-[ACP] + NADP(+) = a (2E)-enoyl-[ACP] + NADPH + H(+). The enzyme catalyses hexadecanoyl-[ACP] + H2O = hexadecanoate + holo-[ACP] + H(+). It catalyses the reaction acetyl-[ACP] + malonyl-[ACP] + H(+) = 3-oxobutanoyl-[ACP] + holo-[ACP] + CO2. The catalysed reaction is 3-oxobutanoyl-[ACP] + NADPH + H(+) = (3R)-hydroxybutanoyl-[ACP] + NADP(+). It carries out the reaction (3R)-hydroxybutanoyl-[ACP] = (2E)-butenoyl-[ACP] + H2O. The enzyme catalyses (2E)-butenoyl-[ACP] + NADPH + H(+) = butanoyl-[ACP] + NADP(+). It catalyses the reaction butanoyl-[ACP] + malonyl-[ACP] + H(+) = 3-oxohexanoyl-[ACP] + holo-[ACP] + CO2. The catalysed reaction is 3-oxohexanoyl-[ACP] + NADPH + H(+) = (3R)-hydroxyhexanoyl-[ACP] + NADP(+). It carries out the reaction (3R)-hydroxyhexanoyl-[ACP] = (2E)-hexenoyl-[ACP] + H2O. The enzyme catalyses (2E)-hexenoyl-[ACP] + NADPH + H(+) = hexanoyl-[ACP] + NADP(+). It catalyses the reaction hexanoyl-[ACP] + malonyl-[ACP] + H(+) = 3-oxooctanoyl-[ACP] + holo-[ACP] + CO2. The catalysed reaction is 3-oxooctanoyl-[ACP] + NADPH + H(+) = (3R)-hydroxyoctanoyl-[ACP] + NADP(+). It carries out the reaction (3R)-hydroxyoctanoyl-[ACP] = (2E)-octenoyl-[ACP] + H2O. The enzyme catalyses (2E)-octenoyl-[ACP] + NADPH + H(+) = octanoyl-[ACP] + NADP(+). It catalyses the reaction octanoyl-[ACP] + malonyl-[ACP] + H(+) = 3-oxodecanoyl-[ACP] + holo-[ACP] + CO2. The catalysed reaction is 3-oxodecanoyl-[ACP] + NADPH + H(+) = (3R)-hydroxydecanoyl-[ACP] + NADP(+). It carries out the reaction (3R)-hydroxydecanoyl-[ACP] = (2E)-decenoyl-[ACP] + H2O. The enzyme catalyses (2E)-decenoyl-[ACP] + NADPH + H(+) = decanoyl-[ACP] + NADP(+). It catalyses the reaction decanoyl-[ACP] + malonyl-[ACP] + H(+) = 3-oxododecanoyl-[ACP] + holo-[ACP] + CO2. The catalysed reaction is 3-oxododecanoyl-[ACP] + NADPH + H(+) = (3R)-hydroxydodecanoyl-[ACP] + NADP(+). It carries out the reaction (3R)-hydroxydodecanoyl-[ACP] = (2E)-dodecenoyl-[ACP] + H2O. The enzyme catalyses (2E)-dodecenoyl-[ACP] + NADPH + H(+) = dodecanoyl-[ACP] + NADP(+). It catalyses the reaction dodecanoyl-[ACP] + malonyl-[ACP] + H(+) = 3-oxotetradecanoyl-[ACP] + holo-[ACP] + CO2. The catalysed reaction is 3-oxotetradecanoyl-[ACP] + NADPH + H(+) = (3R)-hydroxytetradecanoyl-[ACP] + NADP(+). It carries out the reaction (3R)-hydroxytetradecanoyl-[ACP] = (2E)-tetradecenoyl-[ACP] + H2O. The enzyme catalyses (2E)-tetradecenoyl-[ACP] + NADPH + H(+) = tetradecanoyl-[ACP] + NADP(+). It catalyses the reaction tetradecanoyl-[ACP] + malonyl-[ACP] + H(+) = 3-oxohexadecanoyl-[ACP] + holo-[ACP] + CO2. The catalysed reaction is 3-oxohexadecanoyl-[ACP] + NADPH + H(+) = (3R)-hydroxyhexadecanoyl-[ACP] + NADP(+). It carries out the reaction (3R)-hydroxyhexadecanoyl-[ACP] = (2E)-hexadecenoyl-[ACP] + H2O. The enzyme catalyses (2E)-hexadecenoyl-[ACP] + NADPH + H(+) = hexadecanoyl-[ACP] + NADP(+). It catalyses the reaction hexadecanoyl-[ACP] + malonyl-[ACP] + H(+) = 3-oxooctadecanoyl-[ACP] + holo-[ACP] + CO2. The catalysed reaction is 3-oxooctadecanoyl-[ACP] + NADPH + H(+) = (3R)-hydroxyoctadecanoyl-[ACP] + NADP(+). It carries out the reaction (3R)-hydroxyoctadecanoyl-[ACP] = (2E)-octadecenoyl-[ACP] + H2O. The enzyme catalyses (2E)-octadecenoyl-[ACP] + NADPH + H(+) = octadecanoyl-[ACP] + NADP(+). It catalyses the reaction tetradecanoyl-[ACP] + H2O = tetradecanoate + holo-[ACP] + H(+). The catalysed reaction is octadecanoyl-[ACP] + H2O = octadecanoate + holo-[ACP] + H(+). It participates in lipid metabolism; fatty acid biosynthesis. Its activity is regulated as follows. Cerulenin, a potent non-competitive pharmacological inhibitor of FAS, binds covalently to the active site of the condensing enzyme region, inactivating a key enzyme step in fatty acid synthesis. In terms of biological role, fatty acid synthetase is a multifunctional enzyme that catalyzes the de novo biosynthesis of long-chain saturated fatty acids starting from acetyl-CoA and malonyl-CoA in the presence of NADPH. This multifunctional protein contains 7 catalytic activities and a site for the binding of the prosthetic group 4'-phosphopantetheine of the acyl carrier protein ([ACP]) domain. This is Fatty acid synthase (FASN) from Gallus gallus (Chicken).